Reading from the N-terminus, the 201-residue chain is MSKHIAGPEIERLIQLLARIPGLGPRSARRAALHLIKKKETLLEPLGAAIQAAVQKVCICSVCGNVDTIDPCSICTDPRRDDATIIVVEDIADLWALERAKTLAARYHVLGGKLSPLDGIGPDELNIAPLIQRVVQNPITEIILAVNATVEGQTTAHYITDQLSNFSVKVTRLAHGVPVGGELDYLDDGTLAAALQARTNL.

Residues 60 to 75 (CSVCGNVDTIDPCSIC) form a C4-type zinc finger. The region spanning 83-178 (ATIIVVEDIA…KVTRLAHGVP (96 aa)) is the Toprim domain.

It belongs to the RecR family.

Its function is as follows. May play a role in DNA repair. It seems to be involved in an RecBC-independent recombinational process of DNA repair. It may act with RecF and RecO. This chain is Recombination protein RecR, found in Bartonella henselae (strain ATCC 49882 / DSM 28221 / CCUG 30454 / Houston 1) (Rochalimaea henselae).